Reading from the N-terminus, the 224-residue chain is Retinoschisin (224 aa).

An N-terminal signal peptide occupies residues 1 to 23; that stretch reads MSRKIEGFLLLLLFGYEATLGLS. An F5/8 type C domain is found at 63-219; sequence CPYHKPLGFE…IAIRMELLEC (157 aa). 2 disulfides stabilise this stretch: Cys-63/Cys-219 and Cys-110/Cys-142.

As to quaternary structure, homooctamer of 4 homodimers; disulfide-linked. The homooctamer has a flat, cogwheel structure with a diameter of about 14 nm. Two stacked octamers can assemble to form a hexadecamer. As to expression, restricted to the retina (at protein level). Detected in the inner segment of the photoreceptors, the inner nuclear layer, the inner plexiform layer and the ganglion cell layer (at protein level). At the macula, expressed in both the outer and inner nuclear layers and in the inner plexiform layer (at protein level). Detected in retina. Detected only within the photoreceptor cell layer, most prominently within the inner segments of the photoreceptors. Undetectable in the inner plexiform layers and the inner nuclear layer.

Its subcellular location is the secreted. It is found in the cell membrane. Binds negatively charged membrane lipids, such as phosphatidylserine and phosphoinositides. May play a role in cell-cell adhesion processes in the retina, via homomeric interaction between octamers present on the surface of two neighboring cells. Required for normal structure and function of the retina. The chain is Retinoschisin (RS1) from Homo sapiens (Human).